The chain runs to 521 residues: MAP kinase-activated protein kinase mak-1 (521 aa).

Residues 1–12 (MMFEYEEDEDPM) are compositionally biased toward acidic residues. Positions 1–36 (MMFEYEEDEDPMEQQKHEEFKHHSTDHSGSPQENPF) are disordered. Residues 13–26 (EQQKHEEFKHHSTD) are compositionally biased toward basic and acidic residues. A Protein kinase domain is found at 144–405 (TISAEIIGIG…IHELMATPLV (262 aa)). ATP is bound by residues 150–158 (IGIGESGKV) and lysine 173. The active-site Proton acceptor is aspartate 266.

This sequence belongs to the protein kinase superfamily. CAMK Ser/Thr protein kinase family. As to quaternary structure, may interact (via protein kinase domain) with unc-22 (via protein kinase and CRD domains). The cofactor is Mg(2+). Post-translationally, autophosphorylated in vitro. In terms of tissue distribution, expressed in body wall muscles (at protein level). Expressed in intestine.

Its subcellular location is the cytoplasm. It localises to the myofibril. The protein localises to the sarcomere. The protein resides in the a band. The catalysed reaction is L-seryl-[protein] + ATP = O-phospho-L-seryl-[protein] + ADP + H(+). It carries out the reaction L-threonyl-[protein] + ATP = O-phospho-L-threonyl-[protein] + ADP + H(+). In terms of biological role, serine/threonine-protein kinase which may play a role in body wall muscle contraction. May phosphorylate unc-22/twitchin. In Caenorhabditis elegans, this protein is MAP kinase-activated protein kinase mak-1.